The sequence spans 966 residues: MMRLSRNLRRCRWLVFTGWLLALVPAVYLAMTQSGNLTGGGFEVAGSQSLLVHDQLDAHYPDRGAPALALVAAPRPDASYQDIDNAVALLRQIASELPGVTEAPNPTQRPPQPDRPYVVSLRLDARNAGTSDVAKKLRDRIGVKGDQSGQTANGKVRLYVIGQGALSAAAAANTKHDIANAERWNLPIILMVLVAVFGSLAAAAIPLALAVCTVVITMGLVFVLSMHTTMSVFVTSTVSMFGIALAVDYSLFILMRYREELRCGRRPPDAVDAAMATSGLAVVLSGMTVIASLTGIYLINTPALRSMATGAILAVAVAMLTSATLTPAVLATFARAAAKRSALVHWSRRPASTQSWFWSRWVGWVMRRPWITALAASTVLLVMAAPATLMVLGNSLLRQFDSSHEIRTGAAAAAQALGPGALGPVQVLVRFDAGGASAPEHSQTIAAIRHRIAQAPNVVSVAPPRFADDNGSALLSAVLSVDPEDLGARDTITWMRTQLPRVAGAAQVDVGGPTALIKDFDDRVSATQPLVLVFVAVIAFLMLLISIRSVFLAFKGVLMTLLSVAAAYGSLVMVFQWGWARGLGFPALHSIDSTVPPLVLAMTFGLSMDYEIFLLTRIRERFLQTGQTRDAVAYGVRTSARTITSAALIMIAVFCGFAFAGMPLVAEIGVACAVAIAVDATVVRLVLVPALMAMFDRWNWWLPRWLAHILPSVDFDRPLPKVDLGDVVVIPDDFAAAIPPSADVRMVLKSAAKLKRLAPDAICVTDPLAFTGCGCDGKALDQVQLAYRNGIARAISWGQRPVHPVTVWRKRLAVALDALQTTTWECGGVQTHRAGPGYRRRSPVETTNVALPTGDRLQIPTGAETLRFKGYLIMSRNSSHDYADFADLVDTMAPETAAAVLAGMDRYYSCQAPGRQWMATQLVGRLADPQPSDLGDQSPGADAQAKWEEVRRRCLSVAVAMLEEAR.

12 helical membrane-spanning segments follow: residues 13–33, 188–208, 214–234, 235–255, 279–299, 311–331, 373–393, 527–547, 557–577, 595–615, 646–666, and 668–688; these read WLVF…AMTQ, IILM…IPLA, VVIT…SVFV, TSTV…FILM, GLAV…IYLI, AILA…AVLA, ALAA…MVLG, TQPL…LISI, VLMT…VFQW, VPPL…IFLL, AALI…PLVA, and IGVA…LVLV.

It belongs to the resistance-nodulation-cell division (RND) (TC 2.A.6) family. MmpL subfamily.

Its subcellular location is the cell membrane. In Mycobacterium bovis (strain ATCC BAA-935 / AF2122/97), this protein is Probable transport protein MmpL11 (mmpL11).